Reading from the N-terminus, the 291-residue chain is Popeye domain-containing protein 3 (291 aa).

The N-linked (GlcNAc...) asparagine glycan is linked to N4. 3 helical membrane-spanning segments follow: residues 27–44 (GAIY…FMGG), 48–70 (FGLL…WAWV), and 77–99 (IFSW…AYQV).

This sequence belongs to the popeye family. As to expression, expressed in cardiac and skeletal muscle.

Its subcellular location is the membrane. In terms of biological role, may play a role in the maintenance of heart function mediated, at least in part, through cAMP-binding. May play a role in the regulation of KCNK2-mediated current amplitude. The protein is Popeye domain-containing protein 3 (Popdc3) of Mus musculus (Mouse).